The following is a 371-amino-acid chain: DNA-directed RNA polymerase subunit alpha (371 aa).

Residues 1–248 are alpha N-terminal domain (alpha-NTD); the sequence is MSVKYGKFEM…KHFEVFNQFN (248 aa). The interval 264-371 is alpha C-terminal domain (alpha-CTD); sequence DQDELMDKLS…KELVKHEDAK (108 aa).

The protein belongs to the RNA polymerase alpha chain family. Homodimer. The RNAP catalytic core consists of 2 alpha, 1 beta, 1 beta' and 1 omega subunit. When a sigma factor is associated with the core the holoenzyme is formed, which can initiate transcription.

The enzyme catalyses RNA(n) + a ribonucleoside 5'-triphosphate = RNA(n+1) + diphosphate. Functionally, DNA-dependent RNA polymerase catalyzes the transcription of DNA into RNA using the four ribonucleoside triphosphates as substrates. The chain is DNA-directed RNA polymerase subunit alpha from Protochlamydia amoebophila (strain UWE25).